The following is a 604-amino-acid chain: UvrABC system protein C (604 aa).

In terms of domain architecture, GIY-YIG spans 12-90; the sequence is TAPGVYLMRD…IKQHQPRYNL (79 aa). A UVR domain is found at 200–235; the sequence is KDLVSGFRQRMKEAAEGLHYEEAARWRDLLKAIDTT.

This sequence belongs to the UvrC family. As to quaternary structure, interacts with UvrB in an incision complex.

Its subcellular location is the cytoplasm. Functionally, the UvrABC repair system catalyzes the recognition and processing of DNA lesions. UvrC both incises the 5' and 3' sides of the lesion. The N-terminal half is responsible for the 3' incision and the C-terminal half is responsible for the 5' incision. In Trichlorobacter lovleyi (strain ATCC BAA-1151 / DSM 17278 / SZ) (Geobacter lovleyi), this protein is UvrABC system protein C.